We begin with the raw amino-acid sequence, 95 residues long: Small ribosomal subunit protein bS18 (95 aa).

Belongs to the bacterial ribosomal protein bS18 family. Part of the 30S ribosomal subunit. Forms a tight heterodimer with protein bS6.

Binds as a heterodimer with protein bS6 to the central domain of the 16S rRNA, where it helps stabilize the platform of the 30S subunit. The polypeptide is Small ribosomal subunit protein bS18 (Rickettsia rickettsii (strain Sheila Smith)).